The sequence spans 172 residues: Large ribosomal subunit protein uL22y (172 aa).

This sequence belongs to the universal ribosomal protein uL22 family.

The polypeptide is Large ribosomal subunit protein uL22y (Hordeum vulgare (Barley)).